We begin with the raw amino-acid sequence, 519 residues long: Membrane-bound lytic murein transglycosylase F (519 aa).

An N-terminal signal peptide occupies residues 1-32 (MKKLKLNYLLIGVVTLLLAVALWPAIPWSGKA). The segment at 33-269 (DNRIAAIQAR…RLEEKYLGHG (237 aa)) is non-LT domain. The interval 270-519 (NDFDYVDTRS…PNTLSPVSPR (250 aa)) is LT domain. Residue glutamate 314 is part of the active site. Residues 495-519 (PFSQAGAGGKTHSALPNTLSPVSPR) are disordered. Residues 508–519 (ALPNTLSPVSPR) show a composition bias toward polar residues.

The protein in the N-terminal section; belongs to the bacterial solute-binding protein 3 family. This sequence in the C-terminal section; belongs to the transglycosylase Slt family.

The protein resides in the cell outer membrane. The enzyme catalyses Exolytic cleavage of the (1-&gt;4)-beta-glycosidic linkage between N-acetylmuramic acid (MurNAc) and N-acetylglucosamine (GlcNAc) residues in peptidoglycan, from either the reducing or the non-reducing ends of the peptidoglycan chains, with concomitant formation of a 1,6-anhydrobond in the MurNAc residue.. Its function is as follows. Murein-degrading enzyme that degrades murein glycan strands and insoluble, high-molecular weight murein sacculi, with the concomitant formation of a 1,6-anhydromuramoyl product. Lytic transglycosylases (LTs) play an integral role in the metabolism of the peptidoglycan (PG) sacculus. Their lytic action creates space within the PG sacculus to allow for its expansion as well as for the insertion of various structures such as secretion systems and flagella. This is Membrane-bound lytic murein transglycosylase F from Cronobacter sakazakii (strain ATCC BAA-894) (Enterobacter sakazakii).